The chain runs to 177 residues: 3-hydroxydecanoyl-[acyl-carrier-protein] dehydratase (177 aa).

Residue His-71 is part of the active site.

Belongs to the thioester dehydratase family. FabA subfamily. As to quaternary structure, homodimer.

It localises to the cytoplasm. The enzyme catalyses a (3R)-hydroxyacyl-[ACP] = a (2E)-enoyl-[ACP] + H2O. The catalysed reaction is (3R)-hydroxydecanoyl-[ACP] = (2E)-decenoyl-[ACP] + H2O. It catalyses the reaction (2E)-decenoyl-[ACP] = (3Z)-decenoyl-[ACP]. It functions in the pathway lipid metabolism; fatty acid biosynthesis. Functionally, necessary for the introduction of cis unsaturation into fatty acids. Catalyzes the dehydration of (3R)-3-hydroxydecanoyl-ACP to E-(2)-decenoyl-ACP and then its isomerization to Z-(3)-decenoyl-ACP. Can catalyze the dehydratase reaction for beta-hydroxyacyl-ACPs with saturated chain lengths up to 16:0, being most active on intermediate chain length. This Wigglesworthia glossinidia brevipalpis protein is 3-hydroxydecanoyl-[acyl-carrier-protein] dehydratase.